A 1306-amino-acid polypeptide reads, in one-letter code: Disease resistance protein Roq1 (1306 aa).

The TIR domain occupies 10 to 179 (RSYDVFLSFR…QILKDIFDKF (170 aa)). NAD(+) contacts are provided by residues 19 to 24 (RGEDTR) and glycine 52. Residue glutamate 86 is part of the active site. One can recognise an NB-ARC domain in the interval 198 to 417 (KKLSSLLRMD…IDRLKDNPEG (220 aa)). LRR repeat units follow at residues 200–224 (LSSLLRMDLKGVRLVGIWGMGGVGK), 252–275 (LQHHTLLYLQKTLLSKLLKVEFVD), 417–440 (GEIMATLKISFDGLRDYEKSIFLD), 599–622 (PSKLVYLTMKGSSIIELWNGAKRL), 645–669 (ITNLERLILSSCDALVEVHPSVGFL), 670–693 (KNLILLNMDHCISLERLPAIIQSE), 716–739 (MTHLKKLDLTSTGIRELPASIEHL), 741–763 (SLENLQMHSCNQLVSLPSSIWRF), 784–807 (SNCTRELILKLVSIKELPTSIGNL), 808–831 (TSLNFLEICNCKTISSLSSSIWGL), 832–857 (TSLTTLKLLDCRKLKNLPGIPNAINH), 878–902 (LDLLRIIDMSWCSCISSLPHNIWML), 904–926 (FLRILCISYCSRLEYLPENLGHL), 927–949 (EHLEELLADGTGILRLPSSVARL), 961–983 (FAIGPKVQYSSSMLNLPDDVFGS), 987–1010 (LGSVVKLNLSGNGFCNLPETMNQL), 1013–1036 (LEYLDITFCQRLEALPELPPSIKE), and 1045–1070 (LRIMEDLVIKCKELNLIAVTKIEYQN).

This sequence belongs to the disease resistance TIR-NB-LRR family. Homodimer.

The catalysed reaction is NAD(+) + H2O = ADP-D-ribose + nicotinamide + H(+). It carries out the reaction NAD(+) = 2'cADPR + nicotinamide + H(+). Functionally, disease resistance (R) protein that specifically recognizes the Xanthomonas and Pseudomonas effector proteins XopQ and HopQ1, and triggers cell death. An NAD(+) hydrolase (NADase): in response to activation, catalyzes cleavage of NAD(+) into ADP-D-ribose (ADPR) and nicotinamide; NAD(+) cleavage triggers a defense system that promotes cell death. Makes small amounts of 2' cyclic ADPR (2'cADPR). This is Disease resistance protein Roq1 from Nicotiana benthamiana.